The following is a 2261-amino-acid chain: Phospholipid-transporting ATPase ABCA1 (2261 aa).

The S-palmitoyl cysteine moiety is linked to residue C3. N-linked (GlcNAc...) asparagine glycosylation is present at N14. A helical membrane pass occupies residues 22–42 (TCQLLLEVAWPLFIFLILISV). C23 carries the S-palmitoyl cysteine lipid modification. Over 43–639 (RLSYPPYEQH…DIFLRVMSRS (597 aa)) the chain is Extracellular. The segment at 69 to 80 (WVQGIICNANNP) is annulus domain 1. An intrachain disulfide couples C75 to C309. 8 N-linked (GlcNAc...) asparagine glycosylation sites follow: N98, N151, N161, N196, N244, N292, N337, and N349. The interval 368–379 (SRIIWKALKPLL) is annulus domain 2. Residues N400, N478, N489, and N521 are each glycosylated (N-linked (GlcNAc...) asparagine). Residues 564 to 594 (ERTNKIKDGYWDPGPRADPFEDMRYVWGGFA) form a gateway domain region. Transmembrane regions (helical) follow at residues 640 to 660 (MPLFMTLAWIYSVAVIIKGIV), 683 to 703 (FSWFISSLIPLLVSAGLLVVI), 716 to 736 (SVVFVFLSVFAVVTILQCFLI), 745 to 765 (LAAACGGIIYFTLYLPYVLCV), and 777 to 797 (IFASLLSPVAFGFGCEYFALF). Residue N820 is glycosylated (N-linked (GlcNAc...) asparagine). A helical membrane pass occupies residues 827–847 (MMLFDTFLYGVMTWYIEAVFP). The 233-residue stretch at 899-1131 (VSIQNLVKVY…LGTGYYLTLV (233 aa)) folds into the ABC transporter 1 domain. Residue 933 to 940 (GHNGAGKT) coordinates ATP. The chain crosses the membrane as a helical span at residues 1041–1057 (LSVALAFVGGSKVVILD). S1042 is subject to Phosphoserine; by PKA. Residues C1110 and C1111 are each lipidated (S-palmitoyl cysteine). N-linked (GlcNAc...) asparagine glycans are attached at residues N1144 and N1294. The segment at 1283-1312 (RPFTEDDAADPNDSDIDPESRETDLLSGMD) is disordered. Acidic residues predominate over residues 1287-1299 (EDDAADPNDSDID). The residue at position 1296 (S1296) is a Phosphoserine. Residues 1351–1371 (IVLPAVFVCIALVFSLIVPPF) traverse the membrane as a helical segment. Residues 1372-1656 (GKYPSLELQP…ALMTTSVDVL (285 aa)) are Extracellular-facing. N1453 is a glycosylation site (N-linked (GlcNAc...) asparagine). C1463 and C1477 are disulfide-bonded. N-linked (GlcNAc...) asparagine glycans are attached at residues N1504 and N1637. 6 consecutive transmembrane segments (helical) span residues 1657 to 1677 (VSICVIFAMSFVPASFVVFLI), 1703 to 1723 (FVWDMCNYVVPATLVIIIFIC), 1735 to 1755 (LPVLALLLLLYGWSITPLMYP), 1768 to 1788 (VVLTSVNLFIGINGSVATFVL), 1802 to 1822 (ILKSVFLIFPHFCLGRGLIDM), and 1852 to 1872 (NLFAMAVEGVVFFLITVLIQY). Residues 1912-2144 (LEIKELTKIY…FGDGYTIVVR (233 aa)) form the ABC transporter 2 domain. Residue 1946 to 1953 (GVNGAGKS) coordinates ATP. The N-linked (GlcNAc...) asparagine glycan is linked to N2044. Phosphoserine; by PKA is present on S2054. N2238 carries N-linked (GlcNAc...) asparagine glycosylation.

It belongs to the ABC transporter superfamily. ABCA family. In terms of assembly, interacts with MEGF10. May interact with APOE1; functionally associated with APOE1 in the biogenesis of HDLs. Interacts with ABCA8; this interaction potentiates cholesterol efflux. Interacts with ABCA12 and NR1H2; this interaction is required for ABCA1 localization to the cell surface and is necessary for its normal activity and stability. Phosphorylation on Ser-2054 regulates phospholipid efflux. In terms of processing, palmitoylated by ZDHHC8. Palmitoylation is essential for localization to the plasma membrane. As to expression, widely expressed, but most abundant in macrophages.

It localises to the cell membrane. Its subcellular location is the endosome. The enzyme catalyses ATP + H2O + phospholipidSide 1 = ADP + phosphate + phospholipidSide 2.. It carries out the reaction a 1,2-diacyl-sn-glycero-3-phosphocholine(out) + ATP + H2O = a 1,2-diacyl-sn-glycero-3-phosphocholine(in) + ADP + phosphate + H(+). The catalysed reaction is a 1,2-diacyl-sn-glycero-3-phospho-L-serine(out) + ATP + H2O = a 1,2-diacyl-sn-glycero-3-phospho-L-serine(in) + ADP + phosphate + H(+). It catalyses the reaction a sphingomyelin(in) + ATP + H2O = a sphingomyelin(out) + ADP + phosphate + H(+). The enzyme catalyses cholesterol(in) + ATP + H2O = cholesterol(out) + ADP + phosphate + H(+). ATPase activity is decreased by cholesterol and ceramide. ATPase activity is stimulated by phosphatidylcholine and to a lesser degree by phosphatidylserine and sphingomyelin. Phospholipid translocase activity is highly reduced by berylium fluoride and aluminum flouride and reduced by N-ethylmaleimide. Its function is as follows. Catalyzes the translocation of specific phospholipids from the cytoplasmic to the extracellular/lumenal leaflet of membrane coupled to the hydrolysis of ATP. Thereby, participates in phospholipid transfer to apolipoproteins to form nascent high density lipoproteins/HDLs. Transports preferentially phosphatidylcholine over phosphatidylserine. May play a similar role in the efflux of intracellular cholesterol to apolipoproteins and the formation of nascent high density lipoproteins/HDLs. Translocates phospholipids from the outer face of the plasma membrane and forces it through its gateway and annulus into an elongated hydrophobic tunnel in its extracellular domain. The chain is Phospholipid-transporting ATPase ABCA1 from Homo sapiens (Human).